A 77-amino-acid chain; its full sequence is Small ribosomal subunit protein bS18 (77 aa).

This sequence belongs to the bacterial ribosomal protein bS18 family. As to quaternary structure, part of the 30S ribosomal subunit. Forms a tight heterodimer with protein bS6.

Functionally, binds as a heterodimer with protein bS6 to the central domain of the 16S rRNA, where it helps stabilize the platform of the 30S subunit. The chain is Small ribosomal subunit protein bS18 from Bacillus cytotoxicus (strain DSM 22905 / CIP 110041 / 391-98 / NVH 391-98).